The chain runs to 275 residues: Methylglyoxal reductase DkgA (275 aa).

Catalysis depends on Y51, which acts as the Proton donor. H107 is a binding site for substrate. An NADP(+)-binding site is contributed by 187–241 (SPLAQGGEGVFDQKVIRELADKYGKTPAQIVIRWHLDCGLVVIPKSVTPSRIAEN).

The protein belongs to the aldo/keto reductase family. As to quaternary structure, monomer.

Its subcellular location is the cytoplasm. The catalysed reaction is hydroxyacetone + NADP(+) = methylglyoxal + NADPH + H(+). Its function is as follows. Aldo-keto reductase that significantly contributes to cellular methylglyoxal detoxification by catalyzing the NADPH-dependent conversion of methylglyoxal to acetol. The chain is Methylglyoxal reductase DkgA from Salmonella typhimurium (strain LT2 / SGSC1412 / ATCC 700720).